The sequence spans 516 residues: Cytochrome P450 93G1 (516 aa).

The helical transmembrane segment at 11–31 (LLGMGTTMGALALALVVVVVV) threads the bilayer. Residue C454 coordinates heme.

Belongs to the cytochrome P450 family. Heme is required as a cofactor.

It is found in the membrane. The catalysed reaction is a flavanone + reduced [NADPH--hemoprotein reductase] + O2 = a flavone + oxidized [NADPH--hemoprotein reductase] + 2 H2O + H(+). It participates in secondary metabolite biosynthesis; flavonoid biosynthesis. In terms of biological role, functions as a flavone synthase II (FNSII) that catalyzes the direct conversion of flavanones to flavones. In vitro, can convert naringenin and eriodictyol to apigenin and luteolin, respectively. Acts as a key branch point enzyme that channels flavanones to the biosynthesis of soluble tricin O-linked conjugates. This Oryza sativa subsp. japonica (Rice) protein is Cytochrome P450 93G1.